The following is a 181-amino-acid chain: Protein TrbB (181 aa).

Residues methionine 1–threonine 22 form the signal peptide. One can recognise a Thioredoxin domain in the interval threonine 37–glutamine 172.

Its subcellular location is the periplasm. In Escherichia coli (strain K12), this protein is Protein TrbB (trbB).